Consider the following 245-residue polypeptide: 1-(5-phosphoribosyl)-5-[(5-phosphoribosylamino)methylideneamino] imidazole-4-carboxamide isomerase (245 aa).

D7 functions as the Proton acceptor in the catalytic mechanism. D129 acts as the Proton donor in catalysis.

This sequence belongs to the HisA/HisF family.

The protein localises to the cytoplasm. It carries out the reaction 1-(5-phospho-beta-D-ribosyl)-5-[(5-phospho-beta-D-ribosylamino)methylideneamino]imidazole-4-carboxamide = 5-[(5-phospho-1-deoxy-D-ribulos-1-ylimino)methylamino]-1-(5-phospho-beta-D-ribosyl)imidazole-4-carboxamide. Its pathway is amino-acid biosynthesis; L-histidine biosynthesis; L-histidine from 5-phospho-alpha-D-ribose 1-diphosphate: step 4/9. The sequence is that of 1-(5-phosphoribosyl)-5-[(5-phosphoribosylamino)methylideneamino] imidazole-4-carboxamide isomerase from Shigella boydii serotype 18 (strain CDC 3083-94 / BS512).